A 171-amino-acid polypeptide reads, in one-letter code: tRNA-splicing endonuclease (171 aa).

Residues Y110, H117, and K148 contribute to the active site.

The protein belongs to the tRNA-intron endonuclease family. Archaeal short subfamily. In terms of assembly, homotetramer; although the tetramer contains four active sites, only two participate in the cleavage. Therefore, it should be considered as a dimer of dimers.

The catalysed reaction is pretRNA = a 3'-half-tRNA molecule with a 5'-OH end + a 5'-half-tRNA molecule with a 2',3'-cyclic phosphate end + an intron with a 2',3'-cyclic phosphate and a 5'-hydroxyl terminus.. Functionally, endonuclease that removes tRNA introns. Cleaves pre-tRNA at the 5'- and 3'-splice sites to release the intron. The products are an intron and two tRNA half-molecules bearing 2',3' cyclic phosphate and 5'-OH termini. Recognizes a pseudosymmetric substrate in which 2 bulged loops of 3 bases are separated by a stem of 4 bp. In Thermococcus onnurineus (strain NA1), this protein is tRNA-splicing endonuclease.